Reading from the N-terminus, the 182-residue chain is Ribosome maturation factor RimM (182 aa).

Positions 101–182 constitute a PRC barrel domain; it reads VDEYYWSDLK…RIYVNWGVDY (82 aa).

Belongs to the RimM family. Binds ribosomal protein uS19.

It is found in the cytoplasm. An accessory protein needed during the final step in the assembly of 30S ribosomal subunit, possibly for assembly of the head region. Essential for efficient processing of 16S rRNA. May be needed both before and after RbfA during the maturation of 16S rRNA. It has affinity for free ribosomal 30S subunits but not for 70S ribosomes. The polypeptide is Ribosome maturation factor RimM (Acinetobacter baylyi (strain ATCC 33305 / BD413 / ADP1)).